Consider the following 332-residue polypeptide: Anthranilate phosphoribosyltransferase (332 aa).

Residues Gly-80, 83-84 (GD), Thr-88, 90-93 (NLST), 108-116 (KHGNRSASG), and Ser-120 each bind 5-phospho-alpha-D-ribose 1-diphosphate. Residue Gly-80 coordinates anthranilate. Ser-92 provides a ligand contact to Mg(2+). Residue Asn-111 participates in anthranilate binding. Arg-166 contributes to the anthranilate binding site. Asp-224 and Glu-225 together coordinate Mg(2+).

Belongs to the anthranilate phosphoribosyltransferase family. As to quaternary structure, homodimer. Mg(2+) serves as cofactor.

It carries out the reaction N-(5-phospho-beta-D-ribosyl)anthranilate + diphosphate = 5-phospho-alpha-D-ribose 1-diphosphate + anthranilate. The protein operates within amino-acid biosynthesis; L-tryptophan biosynthesis; L-tryptophan from chorismate: step 2/5. In terms of biological role, catalyzes the transfer of the phosphoribosyl group of 5-phosphorylribose-1-pyrophosphate (PRPP) to anthranilate to yield N-(5'-phosphoribosyl)-anthranilate (PRA). The polypeptide is Anthranilate phosphoribosyltransferase (Pyrobaculum calidifontis (strain DSM 21063 / JCM 11548 / VA1)).